The chain runs to 178 residues: MRRPFKTDAPVKDGPRSNREIRIPKVQLIGADGENMGVVPTDQALRMAEEAGLDLVEISPNVEPPVCKILDLGKLKYANQKKAAEARKKQKIVEVKEIKMRPNIDTHDYEVKMKAMGRFFDEGDKVKVTLKFRGREMAHQELGMKLLQQVKADTTEFAKVEAEPKLEGRQMMMVLAPK.

The tract at residues 1-20 (MRRPFKTDAPVKDGPRSNRE) is disordered.

Belongs to the IF-3 family. Monomer.

The protein resides in the cytoplasm. Its function is as follows. IF-3 binds to the 30S ribosomal subunit and shifts the equilibrium between 70S ribosomes and their 50S and 30S subunits in favor of the free subunits, thus enhancing the availability of 30S subunits on which protein synthesis initiation begins. This is Translation initiation factor IF-3 from Rhizobium leguminosarum bv. trifolii (strain WSM2304).